Consider the following 373-residue polypeptide: Dual-specificity RNA methyltransferase RlmN (373 aa).

The Proton acceptor role is filled by Glu94. In terms of domain architecture, Radical SAM core spans 100 to 339 (EDDRATLCVS…VIVRKTRGDD (240 aa)). A disulfide bridge connects residues Cys107 and Cys344. 3 residues coordinate [4Fe-4S] cluster: Cys114, Cys118, and Cys121. Residues 168–169 (GE), Ser200, 222–224 (SIH), and Asn301 contribute to the S-adenosyl-L-methionine site. Residue Cys344 is the S-methylcysteine intermediate of the active site.

The protein belongs to the radical SAM superfamily. RlmN family. [4Fe-4S] cluster is required as a cofactor.

Its subcellular location is the cytoplasm. It catalyses the reaction adenosine(2503) in 23S rRNA + 2 reduced [2Fe-2S]-[ferredoxin] + 2 S-adenosyl-L-methionine = 2-methyladenosine(2503) in 23S rRNA + 5'-deoxyadenosine + L-methionine + 2 oxidized [2Fe-2S]-[ferredoxin] + S-adenosyl-L-homocysteine. The enzyme catalyses adenosine(37) in tRNA + 2 reduced [2Fe-2S]-[ferredoxin] + 2 S-adenosyl-L-methionine = 2-methyladenosine(37) in tRNA + 5'-deoxyadenosine + L-methionine + 2 oxidized [2Fe-2S]-[ferredoxin] + S-adenosyl-L-homocysteine. Specifically methylates position 2 of adenine 2503 in 23S rRNA and position 2 of adenine 37 in tRNAs. m2A2503 modification seems to play a crucial role in the proofreading step occurring at the peptidyl transferase center and thus would serve to optimize ribosomal fidelity. The chain is Dual-specificity RNA methyltransferase RlmN from Shewanella sp. (strain ANA-3).